The chain runs to 250 residues: AA9 family lytic polysaccharide monooxygenase F (250 aa).

An N-terminal signal peptide occupies residues 1-18 (MHLKTFSNLLVFVATVAA). His-19 contributes to the Cu(2+) binding site. Residues Asn-24 and Asn-85 are each glycosylated (N-linked (GlcNAc...) asparagine). Cystine bridges form between Cys-70–Cys-199 and Cys-169–Cys-250. His-108 serves as a coordination point for Cu(2+). N-linked (GlcNAc...) asparagine glycosylation occurs at Asn-146. The O2 site is built by His-185 and Gln-194. Position 196 (Tyr-196) interacts with Cu(2+).

Belongs to the polysaccharide monooxygenase AA9 family. Cu(2+) is required as a cofactor.

The protein resides in the secreted. The enzyme catalyses [(1-&gt;4)-beta-D-glucosyl]n+m + reduced acceptor + O2 = 4-dehydro-beta-D-glucosyl-[(1-&gt;4)-beta-D-glucosyl]n-1 + [(1-&gt;4)-beta-D-glucosyl]m + acceptor + H2O.. In terms of biological role, lytic polysaccharide monooxygenase (LPMO) that depolymerizes crystalline and amorphous polysaccharides via the oxidation of scissile alpha- or beta-(1-4)-glycosidic bonds, yielding C1 and C4 oxidation products. Catalysis by LPMOs requires the reduction of the active-site copper from Cu(II) to Cu(I) by a reducing agent and H(2)O(2) or O(2) as a cosubstrate. In Botryotinia fuckeliana (strain B05.10) (Noble rot fungus), this protein is AA9 family lytic polysaccharide monooxygenase F.